A 382-amino-acid chain; its full sequence is Ribonuclease D (382 aa).

The region spanning 4–169 (ITTTAELASV…DVFAALDADL (166 aa)) is the 3'-5' exonuclease domain. One can recognise an HRDC domain in the interval 208–289 (KPKDLAVMME…QRGLARDPRE (82 aa)).

This sequence belongs to the RNase D family. A divalent metal cation is required as a cofactor.

It localises to the cytoplasm. It carries out the reaction Exonucleolytic cleavage that removes extra residues from the 3'-terminus of tRNA to produce 5'-mononucleotides.. In terms of biological role, exonuclease involved in the 3' processing of various precursor tRNAs. Initiates hydrolysis at the 3'-terminus of an RNA molecule and releases 5'-mononucleotides. The protein is Ribonuclease D of Nitrobacter hamburgensis (strain DSM 10229 / NCIMB 13809 / X14).